The following is a 171-amino-acid chain: ATP synthase subunit b (171 aa).

A helical membrane pass occupies residues 26-48 (LINLAIIIGLLVYAGRGFLGNLL).

This sequence belongs to the ATPase B chain family. As to quaternary structure, F-type ATPases have 2 components, F(1) - the catalytic core - and F(0) - the membrane proton channel. F(1) has five subunits: alpha(3), beta(3), gamma(1), delta(1), epsilon(1). F(0) has four main subunits: a(1), b(1), b'(1) and c(10-14). The alpha and beta chains form an alternating ring which encloses part of the gamma chain. F(1) is attached to F(0) by a central stalk formed by the gamma and epsilon chains, while a peripheral stalk is formed by the delta, b and b' chains.

Its subcellular location is the cellular thylakoid membrane. Functionally, f(1)F(0) ATP synthase produces ATP from ADP in the presence of a proton or sodium gradient. F-type ATPases consist of two structural domains, F(1) containing the extramembraneous catalytic core and F(0) containing the membrane proton channel, linked together by a central stalk and a peripheral stalk. During catalysis, ATP synthesis in the catalytic domain of F(1) is coupled via a rotary mechanism of the central stalk subunits to proton translocation. Its function is as follows. Component of the F(0) channel, it forms part of the peripheral stalk, linking F(1) to F(0). This is ATP synthase subunit b from Synechococcus elongatus (strain ATCC 33912 / PCC 7942 / FACHB-805) (Anacystis nidulans R2).